The following is a 175-amino-acid chain: Mitochondrial inner membrane protease subunit 2 (175 aa).

A helical membrane pass occupies residues 19 to 37 (FFVAVPVAVTFLDRVACVA). Catalysis depends on residues Ser-43 and Lys-91.

Belongs to the peptidase S26 family. IMP2 subfamily. Heterodimer of 2 subunits, IMMPL1 and IMMPL2.

It localises to the mitochondrion inner membrane. Functionally, catalyzes the removal of transit peptides required for the targeting of proteins from the mitochondrial matrix, across the inner membrane, into the inter-membrane space. Known to process the nuclear encoded protein DIABLO. This chain is Mitochondrial inner membrane protease subunit 2 (Immp2l), found in Mus musculus (Mouse).